The chain runs to 1040 residues: Contactin-2 (1040 aa).

Positions 1–30 are cleaved as a signal peptide; sequence MGAPARKRASLLLLLLATMALVSSPGWSFS. 6 Ig-like C2-type domains span residues 39-130, 135-224, 241-324, 329-413, 419-506, and 511-605; these read PVFE…AVLR, QEFS…SVFS, PSIK…GRII, PEWL…AELA, PDFR…GILS, and TKIT…ATVL. 4 disulfides stabilise this stretch: Cys-63–Cys-113, Cys-157–Cys-209, Cys-263–Cys-308, and Cys-350–Cys-397. Residues Asn-78, Asn-200, and Asn-206 are each glycosylated (N-linked (GlcNAc...) asparagine). Residues Asn-463, Asn-479, Asn-500, and Asn-527 are each glycosylated (N-linked (GlcNAc...) asparagine). Fibronectin type-III domains are found at residues 612–710, 715–812, 817–913, and 917–1008; these read PPGG…TKEA, APSG…SAEE, APAK…MKPP, and PPGN…NGGT. N-linked (GlcNAc...) asparagine glycosylation is present at Asn-777. The Cell attachment site signature appears at 796 to 798; that stretch reads RGD. N-linked (GlcNAc...) asparagine glycosylation is found at Asn-832, Asn-920, and Asn-942. The segment at 897–922 is disordered; sequence GTGPASPSADAMTMKPPPRRPPGNIS. Ser-1014 carries GPI-anchor amidated serine lipidation. Positions 1015–1040 are cleaved as a propeptide — removed in mature form; that stretch reads SAVRPAHPGPVFSCMVILMLAGCQRL.

This sequence belongs to the immunoglobulin superfamily. Contactin family.

The protein resides in the cell membrane. Functionally, in conjunction with another transmembrane protein, CNTNAP2, contributes to the organization of axonal domains at nodes of Ranvier by maintaining voltage-gated potassium channels at the juxtaparanodal region. The polypeptide is Contactin-2 (Cntn2) (Mus musculus (Mouse)).